Consider the following 110-residue polypeptide: MKNIFMAVIEFYQRFISPVLPNSCRYYPSCSEYSLHEFKFNSFFGAFFATVLRILRCNPLFRGGIDYPLVRLKIQHQKAIFKICRSEVKFWFVPCKSGKFYVIKSFKKEK.

Belongs to the UPF0161 family.

The protein localises to the cell inner membrane. Functionally, could be involved in insertion of integral membrane proteins into the membrane. The protein is Putative membrane protein insertion efficiency factor of Campylobacter hominis (strain ATCC BAA-381 / DSM 21671 / CCUG 45161 / LMG 19568 / NCTC 13146 / CH001A).